Here is a 209-residue protein sequence, read N- to C-terminus: Thymidine kinase (209 aa).

Residues 25 to 32 (GCMFAGKT) and 103 to 106 (DEVQ) contribute to the ATP site. Glu-104 functions as the Proton acceptor in the catalytic mechanism. Zn(2+) contacts are provided by Cys-160, Cys-163, Cys-198, and Cys-201.

It belongs to the thymidine kinase family. Homotetramer.

It is found in the cytoplasm. It carries out the reaction thymidine + ATP = dTMP + ADP + H(+). The polypeptide is Thymidine kinase (Mycoplasma capricolum subsp. capricolum (strain California kid / ATCC 27343 / NCTC 10154)).